The chain runs to 792 residues: Chloride channel protein CLC-d (792 aa).

The next 12 membrane-spanning stretches (helical) occupy residues 78–98 (FFSLLIGIGTGLAAVFINLSV), 119–139 (AGFIVYLLINLVLVFSSAYII), 170–190 (RTLIGKIFGSIGSVGGGLALG), 195–215 (LVHTGACIASLLGQGGSTKYH), 237–257 (GCAAGVAAAFRAPVGGVLFAL), 267–287 (QLMWRVFFTSAIVAVVVRTAM), 320–340 (LLPMAVIGVIGGLLGALFNQL), 361–381 (IIEACIISCITSAISFGLPLL), 451–471 (LLTFLAMFYTLAVVTFGTAVP), 474–494 (QFVPGIMIGSTYGRLVGMFVV), 508–528 (ALLGAASFLGGSMRMTVSLCV), and 529–549 (IMVEITNNLKLLPLIMLVLLI). CBS domains are found at residues 592–652 (QSQK…KVDF) and 704–761 (LNPS…SSAV). The helical transmembrane segment at 731 to 751 (HLFVVPRPSRVIGLITRKDLL) threads the bilayer.

This sequence belongs to the chloride channel (TC 2.A.49) family. In terms of assembly, homodimer. In terms of tissue distribution, broadly expressed in the plant, but predominantly in the silique.

It localises to the membrane. Voltage-gated chloride channel. The chain is Chloride channel protein CLC-d (CLC-D) from Arabidopsis thaliana (Mouse-ear cress).